Reading from the N-terminus, the 761-residue chain is 5-methyltetrahydropteroyltriglutamate--homocysteine methyltransferase (761 aa).

5-methyltetrahydropteroyltri-L-glutamate-binding positions include 16-19 (RELK) and lysine 118. L-homocysteine contacts are provided by residues 436–438 (IGS) and glutamate 489. Residues 436–438 (IGS) and glutamate 489 each bind L-methionine. 5-methyltetrahydropteroyltri-L-glutamate is bound by residues 520-521 (RC) and tryptophan 566. Residue aspartate 604 coordinates L-homocysteine. Aspartate 604 provides a ligand contact to L-methionine. Residue glutamate 610 coordinates 5-methyltetrahydropteroyltri-L-glutamate. Histidine 646, cysteine 648, and glutamate 670 together coordinate Zn(2+). Histidine 699 functions as the Proton donor in the catalytic mechanism. Cysteine 731 lines the Zn(2+) pocket.

This sequence belongs to the vitamin-B12 independent methionine synthase family. Zn(2+) serves as cofactor.

It carries out the reaction 5-methyltetrahydropteroyltri-L-glutamate + L-homocysteine = tetrahydropteroyltri-L-glutamate + L-methionine. Its pathway is amino-acid biosynthesis; L-methionine biosynthesis via de novo pathway; L-methionine from L-homocysteine (MetE route): step 1/1. Its function is as follows. Catalyzes the transfer of a methyl group from 5-methyltetrahydrofolate to homocysteine resulting in methionine formation. The chain is 5-methyltetrahydropteroyltriglutamate--homocysteine methyltransferase from Vibrio cholerae serotype O1 (strain ATCC 39315 / El Tor Inaba N16961).